The chain runs to 553 residues: CTP synthase (553 aa).

Residues 1 to 266 form an amidoligase domain region; it reads MKYIFVTGGV…GKAVEDLLGL (266 aa). Ser12 is a binding site for CTP. Ser12 lines the UTP pocket. Residue 13–18 participates in ATP binding; sequence SLGKGV. Tyr53 serves as a coordination point for L-glutamine. Residue Asp70 participates in ATP binding. Residues Asp70 and Glu140 each contribute to the Mg(2+) site. CTP contacts are provided by residues 147 to 149, 187 to 192, and Lys223; these read DIE and KTKPTQ. UTP contacts are provided by residues 187-192 and Lys223; that span reads KTKPTQ. The Glutamine amidotransferase type-1 domain occupies 291–541; the sequence is TIAIAGKYTE…VAAALQSGPS (251 aa). Gly353 provides a ligand contact to L-glutamine. Cys380 functions as the Nucleophile; for glutamine hydrolysis in the catalytic mechanism. L-glutamine-binding positions include 381 to 384, Glu404, and Arg464; that span reads LGMQ. Residues His514 and Glu516 contribute to the active site.

The protein belongs to the CTP synthase family. As to quaternary structure, homotetramer.

The enzyme catalyses UTP + L-glutamine + ATP + H2O = CTP + L-glutamate + ADP + phosphate + 2 H(+). It catalyses the reaction L-glutamine + H2O = L-glutamate + NH4(+). The catalysed reaction is UTP + NH4(+) + ATP = CTP + ADP + phosphate + 2 H(+). The protein operates within pyrimidine metabolism; CTP biosynthesis via de novo pathway; CTP from UDP: step 2/2. Its activity is regulated as follows. Allosterically activated by GTP, when glutamine is the substrate; GTP has no effect on the reaction when ammonia is the substrate. The allosteric effector GTP functions by stabilizing the protein conformation that binds the tetrahedral intermediate(s) formed during glutamine hydrolysis. Inhibited by the product CTP, via allosteric rather than competitive inhibition. Its function is as follows. Catalyzes the ATP-dependent amination of UTP to CTP with either L-glutamine or ammonia as the source of nitrogen. Regulates intracellular CTP levels through interactions with the four ribonucleotide triphosphates. This Deinococcus geothermalis (strain DSM 11300 / CIP 105573 / AG-3a) protein is CTP synthase.